The primary structure comprises 473 residues: Aspartyl/glutamyl-tRNA(Asn/Gln) amidotransferase subunit B (473 aa).

The protein belongs to the GatB/GatE family. GatB subfamily. In terms of assembly, heterotrimer of A, B and C subunits.

The catalysed reaction is L-glutamyl-tRNA(Gln) + L-glutamine + ATP + H2O = L-glutaminyl-tRNA(Gln) + L-glutamate + ADP + phosphate + H(+). It carries out the reaction L-aspartyl-tRNA(Asn) + L-glutamine + ATP + H2O = L-asparaginyl-tRNA(Asn) + L-glutamate + ADP + phosphate + 2 H(+). In terms of biological role, allows the formation of correctly charged Asn-tRNA(Asn) or Gln-tRNA(Gln) through the transamidation of misacylated Asp-tRNA(Asn) or Glu-tRNA(Gln) in organisms which lack either or both of asparaginyl-tRNA or glutaminyl-tRNA synthetases. The reaction takes place in the presence of glutamine and ATP through an activated phospho-Asp-tRNA(Asn) or phospho-Glu-tRNA(Gln). This chain is Aspartyl/glutamyl-tRNA(Asn/Gln) amidotransferase subunit B, found in Finegoldia magna (strain ATCC 29328 / DSM 20472 / WAL 2508) (Peptostreptococcus magnus).